The following is a 422-amino-acid chain: Glycine amidinotransferase, mitochondrial (422 aa).

The N-terminal 37 residues, Met1–Gln37, are a transit peptide targeting the mitochondrion. Residues Asp253 and His302 contribute to the active site. The Amidino-cysteine intermediate role is filled by Cys406.

It belongs to the amidinotransferase family. As to quaternary structure, homodimer.

It is found in the mitochondrion inner membrane. The enzyme catalyses L-arginine + glycine = guanidinoacetate + L-ornithine. It participates in amine and polyamine biosynthesis; creatine biosynthesis; creatine from L-arginine and glycine: step 1/2. Functionally, catalyzes the biosynthesis of guanidinoacetate, the immediate precursor of creatine. Creatine plays a vital role in energy metabolism in muscle tissues. May play a role in embryonic and central nervous system development. This chain is Glycine amidinotransferase, mitochondrial, found in Xenopus tropicalis (Western clawed frog).